Reading from the N-terminus, the 386-residue chain is Patatin (386 aa).

An N-terminal signal peptide occupies residues 1 to 23; the sequence is MATTKSFLILFFMILATTSSTCA. Positions 32 to 229 constitute a PNPLA domain; it reads LSIDGGGIKG…TVGDPALLSL (198 aa). The short motif at 36–41 is the GXGXXG element; sequence GGGIKG. Residues 75–79 carry the GXSXG motif; that stretch reads GTSTG. Catalysis depends on Ser-77, which acts as the Nucleophile. N-linked (GlcNAc...) asparagine glycosylation occurs at Asn-115. The active-site Proton acceptor is Asp-215. The DGA/G signature appears at 215–217; that stretch reads DGA.

This sequence belongs to the patatin family.

The protein localises to the vacuole. In terms of biological role, probable lipolytic acyl hydrolase (LAH), an activity which is thought to be involved in the response of tubers to pathogens. The chain is Patatin from Solanum tuberosum (Potato).